The primary structure comprises 368 residues: 3-dehydroquinate synthase (368 aa).

Residues 71–76 (DGESFK), 105–109 (GVIGD), 129–130 (TT), Lys142, Lys151, and 169–172 (TLRT) each bind NAD(+). Glu184, His247, and His264 together coordinate Zn(2+).

This sequence belongs to the sugar phosphate cyclases superfamily. Dehydroquinate synthase family. Requires Co(2+) as cofactor. Zn(2+) serves as cofactor. The cofactor is NAD(+).

The protein localises to the cytoplasm. The catalysed reaction is 7-phospho-2-dehydro-3-deoxy-D-arabino-heptonate = 3-dehydroquinate + phosphate. It functions in the pathway metabolic intermediate biosynthesis; chorismate biosynthesis; chorismate from D-erythrose 4-phosphate and phosphoenolpyruvate: step 2/7. Functionally, catalyzes the conversion of 3-deoxy-D-arabino-heptulosonate 7-phosphate (DAHP) to dehydroquinate (DHQ). The polypeptide is 3-dehydroquinate synthase (Ralstonia pickettii (strain 12J)).